Here is a 368-residue protein sequence, read N- to C-terminus: Phospho-N-acetylmuramoyl-pentapeptide-transferase (368 aa).

10 helical membrane passes run 34 to 54 (GAVVTGALFVFLFGPWIIDHL), 79 to 99 (TPTMGGLMILSGLVVSTVLWA), 102 to 122 (LNPYVWIVLAVTLGFGFVGFY), 140 to 160 (ARILIEAGIALVACYALVRLG), 176 to 196 (LVIKFGWMYVIFGAFVIVGAG), 207 to 227 (GLAIVPVMIASASFGLIAYLA), 247 to 267 (LAVLCGAVLGAGLGFLWFNAP), 271 to 291 (IFMGDTGSLALGGMLGSIAVA), 296 to 316 (IVLAVIGGLFVLEAVSVIVQV), and 345 to 365 (QIVIRFWIISVMLALVGLSTL).

This sequence belongs to the glycosyltransferase 4 family. MraY subfamily. Mg(2+) serves as cofactor.

The protein localises to the cell inner membrane. It carries out the reaction UDP-N-acetyl-alpha-D-muramoyl-L-alanyl-gamma-D-glutamyl-meso-2,6-diaminopimeloyl-D-alanyl-D-alanine + di-trans,octa-cis-undecaprenyl phosphate = di-trans,octa-cis-undecaprenyl diphospho-N-acetyl-alpha-D-muramoyl-L-alanyl-D-glutamyl-meso-2,6-diaminopimeloyl-D-alanyl-D-alanine + UMP. Its pathway is cell wall biogenesis; peptidoglycan biosynthesis. In terms of biological role, catalyzes the initial step of the lipid cycle reactions in the biosynthesis of the cell wall peptidoglycan: transfers peptidoglycan precursor phospho-MurNAc-pentapeptide from UDP-MurNAc-pentapeptide onto the lipid carrier undecaprenyl phosphate, yielding undecaprenyl-pyrophosphoryl-MurNAc-pentapeptide, known as lipid I. This chain is Phospho-N-acetylmuramoyl-pentapeptide-transferase, found in Bradyrhizobium sp. (strain BTAi1 / ATCC BAA-1182).